A 513-amino-acid polypeptide reads, in one-letter code: Probable vesicular acetylcholine transporter-A (513 aa).

Over 1–39 the chain is Cytoplasmic; the sequence is MATEESGGLAQTAAVKLSEMGERTKQLGNAIQDPERQRR. The helical transmembrane segment at 40–60 threads the bilayer; the sequence is IILVIVCVALLLDNMLYMVIV. The Lumenal, vesicle segment spans residues 61–98; that stretch reads PIVPDYLAHLESESEQAHVKGNSSINITQNENFDLQIG. Residues asparagine 82 and asparagine 86 are each glycosylated (N-linked (GlcNAc...) asparagine). Residues 99–119 form a helical membrane-spanning segment; the sequence is VLFASKAILQLLVNPLTGTFI. At 120-125 the chain is on the cytoplasmic side; the sequence is DRVGYD. Residues 126 to 146 form a helical membrane-spanning segment; it reads IPLLIGLSIMFVSTCIFAFAE. Residues 147-156 lie on the Lumenal, vesicle side of the membrane; sequence NYATLFMARS. The helical transmembrane segment at 157–174 threads the bilayer; the sequence is LQGLGSAFADTSGIAMIA. At 175-186 the chain is on the cytoplasmic side; the sequence is DKYAEESERSRA. A helical transmembrane segment spans residues 187-207; it reads LGIALAFISFGSLAAPPFGGV. The Lumenal, vesicle segment spans residues 208–215; the sequence is LYEFAGKR. A helical membrane pass occupies residues 216 to 236; the sequence is FPFIALACVCLADGILCLTVL. Topologically, residues 237 to 257 are cytoplasmic; the sequence is KPFSSRTRENMPVGTPIYKLM. Residues 258–278 traverse the membrane as a helical segment; the sequence is IDPYIAVVAGALTTCNIPLAF. The Lumenal, vesicle portion of the chain corresponds to 279 to 296; sequence LEPTIANWMEETMNASQW. Asparagine 292 is a glycosylation site (N-linked (GlcNAc...) asparagine). The helical transmembrane segment at 297 to 317 threads the bilayer; it reads QIGITWLPAFFPHILGVYLTV. The Cytoplasmic portion of the chain corresponds to 318 to 327; sequence KLAAKYPHLQ. A helical membrane pass occupies residues 328–348; sequence WFYGALGMVIIGASSCIVPAC. At 349–353 the chain is on the lumenal, vesicle side; sequence KNFEQ. A helical membrane pass occupies residues 354–374; it reads LIIPLCGVCFGIALVDTALLP. At 375-390 the chain is on the cytoplasmic side; it reads TLAFLVDVRHVSVYGS. The chain crosses the membrane as a helical span at residues 391 to 411; the sequence is VYAIADISYCVAYALGPIVAG. Residues 412-418 lie on the Lumenal, vesicle side of the membrane; the sequence is KIVHDLG. The chain crosses the membrane as a helical span at residues 419–439; it reads FVQLNLGMGLANVLYAPALLL. At 440-513 the chain is on the cytoplasmic side; it reads LRNVSLMKPS…EEETSEPEYI (74 aa). The segment at 475-513 is disordered; that stretch reads RKKHGYSSSGNCVPIDENGTFAGQSKSFSEEETSEPEYI. Residues 504–513 show a composition bias toward acidic residues; the sequence is EEETSEPEYI.

This sequence belongs to the major facilitator superfamily. Vesicular transporter family.

Its subcellular location is the membrane. In terms of biological role, involved in acetylcholine transport into synaptic vesicles. The chain is Probable vesicular acetylcholine transporter-A from Danio rerio (Zebrafish).